The following is a 376-amino-acid chain: MAAKVCRSVLLLSRSSGAVASSAYPAFGVSSQRHQGTKTEALSMSLGGHQTVRRAHGLRTGGRCALFCHPSATLTAQGWKGSPSWQVQRLLCSPAAEDVSVVYQNGLPVISVRLPSRRERCQFTLKPLSDTVGVFLQQLQAEDRGIDRVTIYSADGARIASSTGIDILLMDNFKLVINDTSYLVQPPRRDLLPHEDGERLNDVKILVQQLYTTLRIEEHQLNKERELIGRLEDLNSQLQPLEKVKEELSKKAERRTTWVLWGGMAYMATQFGILARLTWWEYSWDIMEPVTYFITYGTAMAMYAYFVLTRQEYLYPDARDRQYLLFFHRGAKRTRFDIEKYNKLKDAIAEAELDLKRLRDPLQLNLPIQQIDTSKD.

The N-terminal 34 residues, 1–34 (MAAKVCRSVLLLSRSSGAVASSAYPAFGVSSQRH), are a transit peptide targeting the mitochondrion. Over 35–257 (QGTKTEALSM…LSKKAERRTT (223 aa)) the chain is Mitochondrial matrix. Residues 99 to 189 (VSVVYQNGLP…TSYLVQPPRR (91 aa)) are N-terminal MCU domain. Residues 213-254 (TLRIEEHQLNKERELIGRLEDLNSQLQPLEKVKEELSKKAER) are a coiled coil. A helical membrane pass occupies residues 258 to 280 (WVLWGGMAYMATQFGILARLTWW). Over 281 to 289 (EYSWDIMEP) the chain is Mitochondrial intermembrane. Residues 284–292 (WDIMEPVTY) carry the Selectivity filter motif. Glutamate 288 provides a ligand contact to Ca(2+). The chain crosses the membrane as a helical span at residues 290-309 (VTYFITYGTAMAMYAYFVLT). A juxtamembrane helix region spans residues 309-314 (TRQEYL). Residues 310–376 (RQEYLYPDAR…PIQQIDTSKD (67 aa)) lie on the Mitochondrial matrix side of the membrane. The stretch at 336–363 (FDIEKYNKLKDAIAEAELDLKRLRDPLQ) forms a coiled coil.

The protein belongs to the MCU (TC 1.A.77) family. In terms of assembly, homotetramer. Component of the uniplex complex.

The protein localises to the mitochondrion inner membrane. The enzyme catalyses Ca(2+)(in) = Ca(2+)(out). With respect to regulation, MCU channel activity is regulated by the heterodimer composed of micu1 and micu2, which act as calcium-sensors. At low calcium levels, micu1 occludes the pore of the MCU channel, preventing mitochondrial calcium uptake. At higher calcium levels, calcium-binding to micu1 and micu2 induces a conformational change that weakens mcu-micu1 interactions and moves the micu1-micu2 heterodimer away from the pore, allowing calcium permeation through the channel. MCU channel activity is gated by emre/smdt1 via the juxtamembrane helix loop. Inhibited by ruthenium red or its derivative Ru360. Channel-forming and calcium-conducting subunit of the mitochondrial inner membrane calcium uniporter complex (uniplex), which mediates calcium uptake into the mitochondrial matrix. Mcu channel activity is regulated by the calcium-sensor subunits of the uniplex micu1 and micu2. Mitochondrial calcium homeostasis plays key roles in cellular physiology and regulates ATP production, cytoplasmic calcium signals and activation of cell death pathways. Involved in buffering the amplitude of systolic calcium rises in cardiomyocytes. While dispensable for baseline homeostatic cardiac function, acts as a key regulator of short-term mitochondrial calcium loading underlying a 'fight-or-flight' response during acute stress: acts by mediating a rapid increase of mitochondrial calcium in pacemaker cells. Mitochondrial calcium uptake in skeletal muscle cells is involved in muscle size in adults. The sequence is that of Calcium uniporter protein, mitochondrial from Danio rerio (Zebrafish).